Consider the following 233-residue polypeptide: LexA repressor (233 aa).

Positions 26-46 form a DNA-binding region, H-T-H motif; the sequence is FDEMKEALDLRSKSGIHRLIT. Catalysis depends on for autocatalytic cleavage activity residues Ser-154 and Lys-192.

The protein belongs to the peptidase S24 family. As to quaternary structure, homodimer.

It catalyses the reaction Hydrolysis of Ala-|-Gly bond in repressor LexA.. Functionally, represses a number of genes involved in the response to DNA damage (SOS response), including recA and lexA. In the presence of single-stranded DNA, RecA interacts with LexA causing an autocatalytic cleavage which disrupts the DNA-binding part of LexA, leading to derepression of the SOS regulon and eventually DNA repair. The polypeptide is LexA repressor (Roseobacter denitrificans (strain ATCC 33942 / OCh 114) (Erythrobacter sp. (strain OCh 114))).